We begin with the raw amino-acid sequence, 216 residues long: Cytochrome c biogenesis ATP-binding export protein CcmA (216 aa).

The region spanning 11 to 216 (VSASKLTCIR…RKIRLDYRFV (206 aa)) is the ABC transporter domain. ATP is bound at residue 43 to 50 (GPNGAGKT).

The protein belongs to the ABC transporter superfamily. CcmA exporter (TC 3.A.1.107) family. As to quaternary structure, the complex is composed of two ATP-binding proteins (CcmA) and two transmembrane proteins (CcmB).

It is found in the cell inner membrane. It carries out the reaction heme b(in) + ATP + H2O = heme b(out) + ADP + phosphate + H(+). Its function is as follows. Part of the ABC transporter complex CcmAB involved in the biogenesis of c-type cytochromes; once thought to export heme, this seems not to be the case, but its exact role is uncertain. Responsible for energy coupling to the transport system. The polypeptide is Cytochrome c biogenesis ATP-binding export protein CcmA (Shewanella sp. (strain MR-4)).